A 153-amino-acid chain; its full sequence is Histone H2B.10 (153 aa).

2 stretches are compositionally biased toward basic and acidic residues: residues 1 to 28 and 36 to 53; these read MAPK…EKAP and EKRL…EGKK. Residues 1 to 61 are disordered; the sequence is MAPKAEKKPA…KKAGRKKAKK (61 aa). K7 and K37 each carry N6-acetyllysine. K149 is covalently cross-linked (Glycyl lysine isopeptide (Lys-Gly) (interchain with G-Cter in ubiquitin)).

The protein belongs to the histone H2B family. In terms of assembly, the nucleosome is a histone octamer containing two molecules each of H2A, H2B, H3 and H4 assembled in one H3-H4 heterotetramer and two H2A-H2B heterodimers. The octamer wraps approximately 147 bp of DNA. In terms of processing, can be acetylated to form H2BK6ac and H2BK33ac. Monoubiquitinated by BRE1 to form H2BK143ub1 and deubiquitinated by UBP26. Required for heterochromatic histone H3 di- and trimethylation at H3K4me. May give a specific tag for epigenetic transcriptional activation.

It is found in the nucleus. The protein localises to the chromosome. In terms of biological role, core component of nucleosome. Nucleosomes wrap and compact DNA into chromatin, limiting DNA accessibility to the cellular machineries which require DNA as a template. Histones thereby play a central role in transcription regulation, DNA repair, DNA replication and chromosomal stability. DNA accessibility is regulated via a complex set of post-translational modifications of histones, also called histone code, and nucleosome remodeling. The polypeptide is Histone H2B.10 (H2B.10) (Oryza sativa subsp. indica (Rice)).